We begin with the raw amino-acid sequence, 398 residues long: Stomatin-like protein 1 (398 aa).

Residues 6 to 10 carry the Tyrosine-type lysosomal sorting signal motif; it reads GYRAL. At S28 the chain carries Phosphoserine. Residues 58 to 78 form a helical; Signal-anchor for type III membrane protein membrane-spanning segment; the sequence is LISFLGFLLLLVTFPISGWFA. Topologically, residues 79-398 are cytoplasmic; that stretch reads LKIVPTYERM…KLEAVLRALK (320 aa). Residues 287 to 398 form the SCP2 domain; sequence KQPLAEGLLT…KLEAVLRALK (112 aa).

It belongs to the band 7/mec-2 family. In terms of assembly, interacts with STOM; may redistribute STOM from the plasma membrane to late endosomes. Interacts with FBXW7 isoform 3 and CDK2. Ubiquitously expressed at low levels. Expression is highest in brain.

It localises to the membrane. The protein localises to the late endosome membrane. The protein resides in the membrane raft. It is found in the cell membrane. Its subcellular location is the cytoplasmic vesicle. Its function is as follows. May play a role in cholesterol transfer to late endosomes. May play a role in modulating membrane acid-sensing ion channels. Can specifically inhibit proton-gated current of ASIC1 isoform 1. Can increase inactivation speed of ASIC3. May be involved in regulation of proton sensing in dorsal root ganglions. May play a role in protecting FBXW7 isoform 3 from degradation. This is Stomatin-like protein 1 (STOML1) from Homo sapiens (Human).